We begin with the raw amino-acid sequence, 563 residues long: Inclusion membrane protein M (563 aa).

Over 1–36 (MVYFRAHQPRHTPKTFPLEVHHSFSDKHPQIAKAMR) the chain is Cytoplasmic. The chain crosses the membrane as a helical span at residues 37 to 57 (ITGIALAALSLLAVVACVIAV). A topological domain (vacuolar) is located at residue S58. The chain crosses the membrane as a helical span at residues 59–79 (AGGAAIPLAVISGIAVMSGLL). Residues 80–252 (SAATIICSAK…VLKVALSLGV (173 aa)) lie on the Cytoplasmic side of the membrane. A helical transmembrane segment spans residues 253–273 (LAGVAALIIFLPPSLPFIAVI). Residue G274 is a topological domain, vacuolar. The chain crosses the membrane as a helical span at residues 275-295 (VSSLALGMASFLMIRGIKYLL). The Cytoplasmic segment spans residues 296–563 (EHSPLNRKQL…QLAQYLLDNH (268 aa)).

This sequence belongs to the chlamydial CPn_0065/CT_288/TC_0561 family. As to quaternary structure, interacts with host CCDC146. In host cells infected with C.trachomatis incM, CCDC146 is recruited to the periphery of the pathogen-containing vacuole but recruitment is not dependent on incM.

It is found in the host vacuole. The protein localises to the host pathogen-containing vacuole. Its subcellular location is the host pathogen-containing vacuole membrane. The protein resides in the host pathogen-containing vacuole lumen. It localises to the secreted. Functionally, interferes with host cell cytokinesis, centrosome positioning and Golgi distribution, and contributes to the morphology and stability of the pathogen-containing vacuole. May exert its effects by acting directly or indirectly on host microtubules. In Chlamydia trachomatis serovar D (strain ATCC VR-885 / DSM 19411 / UW-3/Cx), this protein is Inclusion membrane protein M.